We begin with the raw amino-acid sequence, 45 residues long: uncharacterized protein (45 aa).

Residues 15–37 (EVVGTLMAVLITFALVAVVFNFI) traverse the membrane as a helical segment.

The protein localises to the membrane. This is an uncharacterized protein from Archaeoglobus fulgidus (strain ATCC 49558 / DSM 4304 / JCM 9628 / NBRC 100126 / VC-16).